A 449-amino-acid chain; its full sequence is MGKEKVHMNLVVVGHVDAGKSTATGHLIYKCGGIDKRTIEKFEKEAADIGKASFKYAWVLDKLKAERERGITIDIALWKFESPKSVFTIIDAPGHRDFIKNMITGTSQADAAILIIASAQGEFEAGISKDGQTREHALLAFTLGVKQMVVCCNKMDDKTVNYGQERYDEIVKEVSAYIKKVGYNVEKVRFVPISGWQGDNMIEKSEKMPWYKGPTLLEALDMLEPPVRPSDKPLRLPLQTCTKIGGIGTVPVGRVETGVMKPGDVVTFAPANVTTEVKSIEMHHEQLAEATPGDNVGFNVKNVSVKDIRRGNVCGNTKNDPPKEAADFTAQVIILNHPGQIGNGYAPVLDCHTSHIACKFAEIESKIDRRSGKELEKAPKSIKSGDAAIVRMVPQKPMCVEVFNDYAPLGRFAVRDMRQTVAVGIIKAVTKKDGSGGKVTKAAVKASKK.

Residues 5-230 (KVHMNLVVVG…DMLEPPVRPS (226 aa)) enclose the tr-type G domain. The G1 stretch occupies residues 14–21 (GHVDAGKS). 14-21 (GHVDAGKS) is a binding site for GTP. The tract at residues 70–74 (GITID) is G2. The interval 91-94 (DAPG) is G3. Residues 91–95 (DAPGH) and 153–156 (NKMD) each bind GTP. Residues 153–156 (NKMD) form a G4 region. The segment at 194-196 (SGW) is G5. The residue at position 362 (Glu-362) is a 5-glutamyl glycerylphosphorylethanolamine.

The protein belongs to the TRAFAC class translation factor GTPase superfamily. Classic translation factor GTPase family. EF-Tu/EF-1A subfamily. Phosphatidylethanolamine (PE) is a direct precursor of the ethanolamine-phosphoglycerol (EPG) moiety.

The protein localises to the cytoplasm. Functionally, this protein promotes the GTP-dependent binding of aminoacyl-tRNA to the A-site of ribosomes during protein biosynthesis. The chain is Elongation factor 1-alpha (TEF1) from Trypanosoma brucei brucei.